The chain runs to 64 residues: Large ribosomal subunit protein eL37 (64 aa).

Residues Cys20, Cys23, Cys35, and Cys38 each coordinate Zn(2+). The C4-type zinc-finger motif lies at 20–38 (CRRCGRRAFHVRKKVCAAC).

Belongs to the eukaryotic ribosomal protein eL37 family. The cofactor is Zn(2+).

Binds to the 23S rRNA. The sequence is that of Large ribosomal subunit protein eL37 from Methanococcus maripaludis (strain C6 / ATCC BAA-1332).